The chain runs to 74 residues: ATP synthase subunit c (74 aa).

A run of 2 helical transmembrane segments spans residues 13 to 33 and 51 to 71; these read ISVIALAGVGLGIGNIFASLI and ILGFALTEAVALFALLIAFLI.

Belongs to the ATPase C chain family. F-type ATPases have 2 components, F(1) - the catalytic core - and F(0) - the membrane proton channel. F(1) has five subunits: alpha(3), beta(3), gamma(1), delta(1), epsilon(1). F(0) has three main subunits: a(1), b(2) and c(10-14). The alpha and beta chains form an alternating ring which encloses part of the gamma chain. F(1) is attached to F(0) by a central stalk formed by the gamma and epsilon chains, while a peripheral stalk is formed by the delta and b chains.

The protein resides in the cell inner membrane. F(1)F(0) ATP synthase produces ATP from ADP in the presence of a proton or sodium gradient. F-type ATPases consist of two structural domains, F(1) containing the extramembraneous catalytic core and F(0) containing the membrane proton channel, linked together by a central stalk and a peripheral stalk. During catalysis, ATP synthesis in the catalytic domain of F(1) is coupled via a rotary mechanism of the central stalk subunits to proton translocation. Its function is as follows. Key component of the F(0) channel; it plays a direct role in translocation across the membrane. A homomeric c-ring of between 10-14 subunits forms the central stalk rotor element with the F(1) delta and epsilon subunits. This Granulibacter bethesdensis (strain ATCC BAA-1260 / CGDNIH1) protein is ATP synthase subunit c.